A 418-amino-acid polypeptide reads, in one-letter code: E3 ubiquitin-protein ligase pellino homolog 1 (418 aa).

The 188-residue stretch at 13-200 (APVKYGELIV…MHPRNGFTED (188 aa)) folds into the FHA; atypical domain. Position 121 is a phosphoserine (Ser-121). Thr-127 is modified (phosphothreonine). The ring-like domain; necessary for ubiquitination of RIPK3 stretch occupies residues 311–399 (CGHVHGYHNW…TFHAACPFCA (89 aa)).

It belongs to the pellino family. Interacts with MAP3K7. Upon IL1B treatment, forms a complex with TRAF6, IRAK1, IRAK4 and MYD88; this complex recruits MAP3K7/TAK1, TAB1 and TAB2 to mediate NF-kappa-B activation. Direct binding of SMAD6 to PELI1 prevents the complex formation and hence negatively regulates IL1R-TLR signaling and eventually NF-kappa-B-mediated gene expression. Interacts (via atypical FHA domain) with RIPK3. Binds preferentially to the 'Thr-182' phosphorylated form of RIPK3. Interacts with RIPK1. Phosphorylation by IRAK1 and IRAK4 enhances its E3 ligase activity. Phosphorylated by ATM in response to DNA damage, promoting localization to DNA double-strand breaks (DSBs) and ability to mediate 'Lys-63'-linked ubiquitination of NBN. Post-translationally, sumoylated.

Its subcellular location is the chromosome. The enzyme catalyses S-ubiquitinyl-[E2 ubiquitin-conjugating enzyme]-L-cysteine + [acceptor protein]-L-lysine = [E2 ubiquitin-conjugating enzyme]-L-cysteine + N(6)-ubiquitinyl-[acceptor protein]-L-lysine.. It functions in the pathway protein modification; protein ubiquitination. Its function is as follows. E3 ubiquitin ligase catalyzing the covalent attachment of ubiquitin moieties onto substrate proteins. Involved in the TLR and IL-1 signaling pathways via interaction with the complex containing IRAK kinases and TRAF6. Acts as a positive regulator of inflammatory response in microglia through activation of NF-kappa-B and MAP kinase. Mediates 'Lys-63'-linked polyubiquitination of IRAK1 allowing subsequent NF-kappa-B activation. Conjugates 'Lys-63'-linked ubiquitin chains to the adapter protein ASC/PYCARD, which in turn is crucial for NLRP3 inflammasome activation. Mediates 'Lys-48'-linked polyubiquitination of RIPK3 leading to its subsequent proteasome-dependent degradation; preferentially recognizes and mediates the degradation of the 'Thr-182' phosphorylated form of RIPK3. Negatively regulates necroptosis by reducing RIPK3 expression. Mediates 'Lys-63'-linked ubiquitination of RIPK1. Following phosphorylation by ATM, catalyzes 'Lys-63'-linked ubiquitination of NBN, promoting DNA repair via homologous recombination. Negatively regulates activation of the metabolic mTORC1 signaling pathway by mediating 'Lys-63'-linked ubiquitination of mTORC1-inhibitory protein TSC1 and thereby promoting TSC1/TSC2 complex stability. This Mus musculus (Mouse) protein is E3 ubiquitin-protein ligase pellino homolog 1 (Peli1).